Here is a 359-residue protein sequence, read N- to C-terminus: 4-hydroxy-3-methylbut-2-en-1-yl diphosphate synthase (flavodoxin) (359 aa).

Cys264, Cys267, Cys299, and Glu306 together coordinate [4Fe-4S] cluster.

It belongs to the IspG family. [4Fe-4S] cluster serves as cofactor.

It carries out the reaction (2E)-4-hydroxy-3-methylbut-2-enyl diphosphate + oxidized [flavodoxin] + H2O + 2 H(+) = 2-C-methyl-D-erythritol 2,4-cyclic diphosphate + reduced [flavodoxin]. The protein operates within isoprenoid biosynthesis; isopentenyl diphosphate biosynthesis via DXP pathway; isopentenyl diphosphate from 1-deoxy-D-xylulose 5-phosphate: step 5/6. Converts 2C-methyl-D-erythritol 2,4-cyclodiphosphate (ME-2,4cPP) into 1-hydroxy-2-methyl-2-(E)-butenyl 4-diphosphate. This is 4-hydroxy-3-methylbut-2-en-1-yl diphosphate synthase (flavodoxin) from Helicobacter pylori (strain HPAG1).